Consider the following 325-residue polypeptide: mRNA decay activator protein ZFP36 (325 aa).

A necessary for nuclear export region spans residues 1–15 (MDLAAIYKSLLSLSP). The necessary and sufficient for the association with mRNA decay enzymes and mRNA decay activation stretch occupies residues 1-98 (MDLAAIYKSL…PTSPTATPTT (98 aa)). 2 necessary for localization of ARE-containing mRNAs to processing bodies (PBs) regions span residues 1–172 (MDLA…DLAA) and 98–325 (TSSR…SVSE). Residues 15 to 48 (PELPSDLGETESSTSWASSGPWSLSSSDSSLPEA) are compositionally biased toward low complexity. Residues 15 to 101 (PELPSDLGET…PTATPTTSSR (87 aa)) form a disordered region. S58 carries the post-translational modification Phosphoserine; by MAPKAPK2. S64 carries the post-translational modification Phosphoserine. The stretch at 69–73 (PPPPG) is one P-P-P-P-G repeat. Residues 75-101 (APLAPRPSSELSPSPTSPTATPTTSSR) show a composition bias toward low complexity. Phosphoserine occurs at positions 86 and 88. T90 bears the Phosphothreonine mark. At S91 the chain carries Phosphoserine. The segment at 93–166 (TATPTTSSRY…GSRCHFIHNP (74 aa)) is necessary for nuclear localization. Residues 95-171 (TPTTSSRYKT…FIHNPSEDLA (77 aa)) form a necessary for RNA-binding region. C3H1-type zinc fingers lie at residues 101–129 (RYKTELCRTFSESGRCRYGAKCQFAHGLG) and 139–167 (KYKTELCHKFYLQGRCPYGSRCHFIHNPS). Residues 101 to 192 (RYKTELCRTF…ISFSGLPSGR (92 aa)) are necessary for interaction with PABPN1. S167 bears the Phosphoserine mark. A necessary for mRNA decay activation region spans residues 172–325 (APGHPHVLRQ…PIFNRISVSE (154 aa)). S184 is modified (phosphoserine; by MAPKAPK2). 2 disordered regions span residues 185-248 (FSGL…TPAC) and 260-325 (VWGP…SVSE). The residue at position 195 (S195) is a Phosphoserine. Residues 196–200 (PPPAS) form a P-P-P-P-G repeat. The segment covering 204 to 214 (PSVPSWSFSPS) has biased composition (low complexity). S216 carries the phosphoserine modification. The stretch at 217–222 (PPPPPG) is one P-P-P-P-G repeat. S227 carries the post-translational modification Phosphoserine; by MAPK1; in vitro. Phosphoserine occurs at positions 275, 295, and 322. Low complexity predominate over residues 285-295 (SSGSSLGGSDS). Residues 311–325 (APRRLPIFNRISVSE) form an interaction with CNOT1 region.

Associates with cytoplasmic CCR4-NOT and PAN2-PAN3 deadenylase complexes to trigger ARE-containing mRNA deadenylation and decay processes. Part of a mRNA decay activation complex at least composed of poly(A)-specific exoribonucleases CNOT6, EXOSC2 and XRN1 and mRNA-decapping enzymes DCP1A and DCP2. Associates with the RNA exosome complex. Interacts (via phosphorylated form) with 14-3-3 proteins; these interactions promote exclusion of ZFP36 from cytoplasmic stress granules in response to arsenite treatment in a MAPKAPK2-dependent manner and does not prevent CCR4-NOT deadenylase complex recruitment or ZFP36-induced ARE-containing mRNA deadenylation and decay processes. Interacts with 14-3-3 proteins; these interactions occur in response to rapamycin in an Akt-dependent manner. Interacts with AGO2 and AGO4. Interacts (via C-terminus) with CNOT1; this interaction occurs in a RNA-independent manner and induces mRNA deadenylation. Interacts (via N-terminus) with CNOT6. Interacts with CNOT6L. Interacts (via C-terminus) with CNOT7; this interaction occurs in a RNA-independent manner, induces mRNA deadenylation and is inhibited in a phosphorylation MAPKAPK2-dependent manner. Interacts (via unphosphorylated form) with CNOT8; this interaction occurs in a RNA-independent manner and is inhibited in a phosphorylation MAPKAPK2-dependent manner. Interacts with DCP1A. Interacts (via N-terminus) with DCP2. Interacts with EDC3. Interacts (via N-terminus) with EXOSC2. Interacts with heat shock 70 kDa proteins. Interacts with KHSRP; this interaction increases upon cytokine-induced treatment. Interacts with MAP3K4; this interaction enhances the association with SH3KBP1/CIN85. Interacts with MAPKAPK2; this interaction occurs upon skeletal muscle satellite cell activation. Interacts with NCL. Interacts with NUP214; this interaction increases upon lipopolysaccharide (LPS) stimulation. Interacts with PABPC1; this interaction occurs in a RNA-dependent manner. Interacts (via hypophosphorylated form) with PABPN1 (via RRM domain and C-terminal arginine-rich region); this interaction occurs in the nucleus in a RNA-independent manner, decreases in presence of single-stranded poly(A) RNA-oligomer and in a p38 MAPK-dependent-manner and inhibits nuclear poly(A) tail synthesis. Interacts with PAN2. Interacts (via C3H1-type zinc finger domains) with PKM. Interacts (via C3H1-type zinc finger domains) with nuclear RNA poly(A) polymerase. Interacts with PPP2CA; this interaction occurs in LPS-stimulated cells and induces ZFP36 dephosphorylation, and hence may promote ARE-containing mRNAs decay. Interacts (via C-terminus) with PRR5L (via C-terminus); this interaction may accelerate ZFP36-mediated mRNA decay during stress. Interacts (via C-terminus) with SFN; this interaction occurs in a phosphorylation-dependent manner. Interacts (via extreme C-terminal region) with SH3KBP1/CIN85 (via SH3 domains); this interaction enhances MAP3K4-induced phosphorylation of ZFP36 at Ser-64 and Ser-91 and does not alter neither ZFP36 binding to ARE-containing transcripts nor TNF-alpha mRNA decay. Interacts with XRN1. Interacts (via C-terminus and Ser-184 phosphorylated form) with YWHAB; this interaction occurs in a p38/MAPKAPK2-dependent manner, increases cytoplasmic localization of ZFP36 and protects ZFP36 from Ser-184 dephosphorylation by serine/threonine phosphatase 2A, and hence may be crucial for stabilizing ARE-containing mRNAs. Interacts (via phosphorylated form) with YWHAE. Interacts (via C-terminus) with YWHAG; this interaction occurs in a phosphorylation-dependent manner. Interacts with YWHAH; this interaction occurs in a phosphorylation-dependent manner. Interacts with YWHAQ; this interaction occurs in a phosphorylation-dependent manner. Interacts with (via C-terminus) YWHAZ; this interaction occurs in a phosphorylation-dependent manner. Does not interact with SH3KBP1. Interacts (via P-P-P-P-G repeats) with GIGYF2; the interaction is direct. Phosphorylated. Phosphorylation at serine and/or threonine residues occurs in a p38 MAPK- and MAPKAPK2-dependent manner. Phosphorylated by MAPKAPK2 at Ser-58 and Ser-184; phosphorylation increases its stability and cytoplasmic localization, promotes binding to 14-3-3 adapter proteins and inhibits the recruitment of cytoplasmic CCR4-NOT and PAN2-PAN3 deadenylase complexes to the mRNA decay machinery, thereby inhibiting ZFP36-induced ARE-containing mRNA deadenylation and decay processes. Phosphorylation by MAPKAPK2 does not impair ARE-containing RNA-binding. Phosphorylated in a MAPKAPK2- and p38 MAPK-dependent manner upon skeletal muscle satellite cell activation; this phosphorylation inhibits ZFP36-mediated mRNA decay activity, and hence stabilizes MYOD1 mRNA. Phosphorylated by MAPK1 upon mitogen stimulation. Phosphorylated at Ser-64 and Ser-91; these phosphorylations increase in a SH3KBP1-dependent manner. Phosphorylated at serine and threonine residues in a pyruvate kinase PKM- and p38 MAPK-dependent manner. Phosphorylation at Ser-58 may participate in the PKM-mediated degradation of ZFP36 in a p38 MAPK-dependent manner. Dephosphorylated by serine/threonine phosphatase 2A at Ser-184. In terms of processing, ubiquitinated; pyruvate kinase (PKM)-dependent ubiquitination leads to proteasomal degradation through a p38 MAPK signaling pathway.

The protein resides in the nucleus. It is found in the cytoplasm. The protein localises to the cytoplasmic granule. It localises to the P-body. Zinc-finger RNA-binding protein that destabilizes numerous cytoplasmic AU-rich element (ARE)-containing mRNA transcripts by promoting their poly(A) tail removal or deadenylation, and hence provide a mechanism for attenuating protein synthesis. Acts as an 3'-untranslated region (UTR) ARE mRNA-binding adapter protein to communicate signaling events to the mRNA decay machinery. Recruits deadenylase CNOT7 (and probably the CCR4-NOT complex) via association with CNOT1, and hence promotes ARE-mediated mRNA deadenylation. Also functions by recruiting components of the cytoplasmic RNA decay machinery to the bound ARE-containing mRNAs. Self regulates by destabilizing its own mRNA. Binds to 3'-UTR ARE of numerous mRNAs. Also binds to ARE of its own mRNA. Plays a role in anti-inflammatory responses; suppresses tumor necrosis factor (TNF)-alpha production by stimulating ARE-mediated TNF-alpha mRNA decay and several other inflammatory ARE-containing mRNAs in interferon (IFN)- and/or lipopolysaccharide (LPS)-induced macrophages. Also plays a role in the regulation of dendritic cell maturation at the post-transcriptional level, and hence operates as part of a negative feedback loop to limit the inflammatory response. Promotes ARE-mediated mRNA decay of hypoxia-inducible factor HIF1A mRNA during the response of endothelial cells to hypoxia. Positively regulates early adipogenesis of preadipocytes by promoting ARE-mediated mRNA decay of immediate early genes (IEGs). Negatively regulates hematopoietic/erythroid cell differentiation by promoting ARE-mediated mRNA decay of the transcription factor STAT5B mRNA. Plays a role in maintaining skeletal muscle satellite cell quiescence by promoting ARE-mediated mRNA decay of the myogenic determination factor MYOD1 mRNA. Also associates with and regulates the expression of non-ARE-containing target mRNAs at the post-transcriptional level, such as MHC class I mRNAs. Participates in association with argonaute RISC catalytic components in the ARE-mediated mRNA decay mechanism; assists microRNA (miRNA) targeting ARE-containing mRNAs. May also play a role in the regulation of cytoplasmic mRNA decapping; enhances decapping of ARE-containing RNAs, in vitro. Involved in the delivery of target ARE-mRNAs to processing bodies (PBs). In addition to its cytosolic mRNA-decay function, affects nuclear pre-mRNA processing. Negatively regulates nuclear poly(A)-binding protein PABPN1-stimulated polyadenylation activity on ARE-containing pre-mRNA during LPS-stimulated macrophages. Also involved in the regulation of stress granule (SG) and P-body (PB) formation and fusion. Plays a role in the regulation of keratinocyte proliferation, differentiation and apoptosis. Plays a role as a tumor suppressor by inhibiting cell proliferation in breast cancer cells. In Ovis aries (Sheep), this protein is mRNA decay activator protein ZFP36.